A 311-amino-acid polypeptide reads, in one-letter code: Formimidoylglutamase (311 aa).

Positions 130, 155, 157, 159, 242, and 244 each coordinate Mn(2+).

Belongs to the arginase family. Requires Mn(2+) as cofactor.

The enzyme catalyses N-formimidoyl-L-glutamate + H2O = formamide + L-glutamate. It participates in amino-acid degradation; L-histidine degradation into L-glutamate; L-glutamate from N-formimidoyl-L-glutamate (hydrolase route): step 1/1. Its function is as follows. Catalyzes the conversion of N-formimidoyl-L-glutamate to L-glutamate and formamide. The protein is Formimidoylglutamase of Staphylococcus haemolyticus (strain JCSC1435).